The following is a 73-amino-acid chain: Large ribosomal subunit protein bL31 (73 aa).

Zn(2+) contacts are provided by cysteine 16, cysteine 18, cysteine 37, and cysteine 40.

The protein belongs to the bacterial ribosomal protein bL31 family. Type A subfamily. In terms of assembly, part of the 50S ribosomal subunit. The cofactor is Zn(2+).

Its function is as follows. Binds the 23S rRNA. The protein is Large ribosomal subunit protein bL31 of Pseudomonas fluorescens (strain ATCC BAA-477 / NRRL B-23932 / Pf-5).